Consider the following 452-residue polypeptide: Exodeoxyribonuclease 7 large subunit (452 aa).

The protein belongs to the XseA family. Heterooligomer composed of large and small subunits.

The protein resides in the cytoplasm. The enzyme catalyses Exonucleolytic cleavage in either 5'- to 3'- or 3'- to 5'-direction to yield nucleoside 5'-phosphates.. Its function is as follows. Bidirectionally degrades single-stranded DNA into large acid-insoluble oligonucleotides, which are then degraded further into small acid-soluble oligonucleotides. This chain is Exodeoxyribonuclease 7 large subunit, found in Bacillus cereus (strain G9842).